Consider the following 217-residue polypeptide: Large ribosomal subunit protein uL3 (217 aa).

The segment at 127-162 (GFSRGPMSHGSKNHRAPGSTGAGTTPGRIYPGKRMA) is disordered. The segment covering 142–153 (APGSTGAGTTPG) has biased composition (low complexity).

The protein belongs to the universal ribosomal protein uL3 family. As to quaternary structure, part of the 50S ribosomal subunit. Forms a cluster with proteins L14 and L19.

Functionally, one of the primary rRNA binding proteins, it binds directly near the 3'-end of the 23S rRNA, where it nucleates assembly of the 50S subunit. This is Large ribosomal subunit protein uL3 from Prochlorococcus marinus (strain MIT 9312).